A 207-amino-acid chain; its full sequence is Guanylate kinase (207 aa).

Positions 10-187 constitute a Guanylate kinase-like domain; it reads GFFIVLSAAS…AVERLQVIYQ (178 aa). 17–24 contributes to the ATP binding site; the sequence is AASGTGKT.

It belongs to the guanylate kinase family.

The protein resides in the cytoplasm. The catalysed reaction is GMP + ATP = GDP + ADP. Functionally, essential for recycling GMP and indirectly, cGMP. This is Guanylate kinase from Syntrophus aciditrophicus (strain SB).